Consider the following 98-residue polypeptide: NADH-ubiquinone oxidoreductase chain 4L (98 aa).

A run of 3 helical transmembrane segments spans residues 2 to 22 (PSIF…TLVF), 29 to 49 (SLLC…LIIL), and 61 to 81 (ILLL…LVMV).

This sequence belongs to the complex I subunit 4L family. Core subunit of respiratory chain NADH dehydrogenase (Complex I) which is composed of 45 different subunits.

The protein localises to the mitochondrion inner membrane. The catalysed reaction is a ubiquinone + NADH + 5 H(+)(in) = a ubiquinol + NAD(+) + 4 H(+)(out). Functionally, core subunit of the mitochondrial membrane respiratory chain NADH dehydrogenase (Complex I) which catalyzes electron transfer from NADH through the respiratory chain, using ubiquinone as an electron acceptor. Part of the enzyme membrane arm which is embedded in the lipid bilayer and involved in proton translocation. The chain is NADH-ubiquinone oxidoreductase chain 4L (MT-ND4L) from Propithecus tattersalli (Golden-crowned Sifaka).